The chain runs to 332 residues: T-cell surface glycoprotein CD1c2 (332 aa).

The N-terminal stretch at 1–17 (MLFLQFLFVDVVLGGSI) is a signal peptide. At 18–300 (TENVVQENIS…IILYWGHGLS (283 aa)) the chain is on the extracellular side. Residues asparagine 25, asparagine 38, and asparagine 75 are each glycosylated (N-linked (GlcNAc...) asparagine). Intrachain disulfides connect cysteine 120/cysteine 184 and cysteine 224/cysteine 279. Residues 205-292 (PEVWLSSSPN…HSSLRDQDII (88 aa)) form the Ig-like domain. Residues 301–321 (VILIALAVIVPLVLLIVLVLL) traverse the membrane as a helical segment. The Cytoplasmic segment spans residues 322 to 332 (CKKRCTYQGIP).

In terms of assembly, heterodimer with B2M (beta-2-microglobulin).

It is found in the cell membrane. The protein localises to the endosome membrane. Antigen-presenting protein that binds self and non-self lipid and glycolipid antigens and presents them to T-cell receptors on natural killer T-cells. This chain is T-cell surface glycoprotein CD1c2 (CD1C2), found in Cavia porcellus (Guinea pig).